Reading from the N-terminus, the 255-residue chain is MLRPLRKSVLASCRHCFKVCGGLPQKQLPLFSPLLLRARYSSTDSSTKRSNKSDKIDAPGFKKIFLVAIIGTVIFVKTVQSLDKNKPKTTLSEEEFENVVKGLKRRVAIFPQGEVDIKFSLSPSIEETRKVLQKSQGDDINELQFVDPVKVIDYYRTLRDDRYEALLNEYYKKYGCDTYAYNLPTGMLVMLLGRYFKENFKAGDKLVVVNFPHSIADATRFENEVSIVSKIFVPRKLSGSDVCKYYETVGKADII.

The N-terminal 40 residues, 1-40, are a transit peptide targeting the mitochondrion; the sequence is MLRPLRKSVLASCRHCFKVCGGLPQKQLPLFSPLLLRARY. The helical transmembrane segment at 64 to 82 threads the bilayer; it reads IFLVAIIGTVIFVKTVQSL.

Belongs to the AIM36 family.

Its subcellular location is the mitochondrion membrane. The protein is Altered inheritance of mitochondria protein 36, mitochondrial (AIM36) of Saccharomyces cerevisiae (strain RM11-1a) (Baker's yeast).